Here is a 265-residue protein sequence, read N- to C-terminus: Cytochrome c oxidase subunit 3 (265 aa).

A run of 7 helical transmembrane segments spans residues 16-36, 41-61, 81-101, 137-157, 162-182, 200-220, and 245-265; these read PWPISGSLGALATTVGGVMYM, GGATLLSLGLIFILYTMFVWW, GPRYGSISFIVSEVMFLFAFF, TPILLSSGAAVTWAHHAILAG, AVYALVATVSLALVFTGFQGM, FFLATGFHGFHVIIGTLFLII, and WHFVDVVRLFPFVSIYWWGGI.

This sequence belongs to the cytochrome c oxidase subunit 3 family. As to quaternary structure, component of the cytochrome c oxidase (complex IV, CIV), a multisubunit enzyme composed of a catalytic core of 3 subunits and several supernumerary subunits. The complex exists as a monomer or a dimer and forms supercomplexes (SCs) in the inner mitochondrial membrane with ubiquinol-cytochrome c oxidoreductase (cytochrome b-c1 complex, complex III, CIII).

It is found in the mitochondrion inner membrane. It carries out the reaction 4 Fe(II)-[cytochrome c] + O2 + 8 H(+)(in) = 4 Fe(III)-[cytochrome c] + 2 H2O + 4 H(+)(out). Functionally, component of the cytochrome c oxidase, the last enzyme in the mitochondrial electron transport chain which drives oxidative phosphorylation. The respiratory chain contains 3 multisubunit complexes succinate dehydrogenase (complex II, CII), ubiquinol-cytochrome c oxidoreductase (cytochrome b-c1 complex, complex III, CIII) and cytochrome c oxidase (complex IV, CIV), that cooperate to transfer electrons derived from NADH and succinate to molecular oxygen, creating an electrochemical gradient over the inner membrane that drives transmembrane transport and the ATP synthase. Cytochrome c oxidase is the component of the respiratory chain that catalyzes the reduction of oxygen to water. Electrons originating from reduced cytochrome c in the intermembrane space (IMS) are transferred via the dinuclear copper A center (CU(A)) of subunit 2 and heme A of subunit 1 to the active site in subunit 1, a binuclear center (BNC) formed by heme A3 and copper B (CU(B)). The BNC reduces molecular oxygen to 2 water molecules using 4 electrons from cytochrome c in the IMS and 4 protons from the mitochondrial matrix. The polypeptide is Cytochrome c oxidase subunit 3 (COX3) (Vicia faba (Broad bean)).